Consider the following 145-residue polypeptide: Procyclic form-specific polypeptide B-alpha (145 aa).

An N-terminal signal peptide occupies residues 1–27 (MAPRSLYLLAVLLFSANLFAGVGFAAA). Residues 28 to 127 (AEGPEDKGLT…PEPEPGAATL (100 aa)) are disordered. Residues 31-52 (PEDKGLTKGGKGKGEKGTKVGA) are compositionally biased toward basic and acidic residues. Tandem repeats lie at residues 59-60 (DP), 61-62 (DP), 63-64 (EP), 65-66 (EP), 67-68 (EP), 69-70 (EP), 71-72 (EP), 73-74 (EP), 75-76 (EP), 77-78 (EP), 79-80 (EP), 81-82 (EP), 83-84 (EP), 85-86 (EP), 87-88 (EP), 89-90 (EP), 91-92 (EP), 93-94 (EP), 95-96 (EP), 97-98 (EP), 99-100 (EP), 101-102 (EP), 103-104 (EP), 105-106 (EP), 107-108 (EP), 109-110 (EP), 111-112 (EP), 113-114 (EP), 115-116 (EP), 117-118 (EP), 119-120 (EP), and 121-122 (EP). The tract at residues 59–122 (DPDPEPEPEP…EPEPEPEPEP (64 aa)) is 32 X 2 AA tandem repeats of [DE]-P. Residues 60–120 (PDPEPEPEPE…EPEPEPEPEP (61 aa)) show a composition bias toward acidic residues. The GPI-anchor amidated glycine moiety is linked to residue glycine 123. Positions 124–145 (AATLKSVALPFAIAAAALVAAF) are excised as a propeptide.

It is found in the cell membrane. Major surface antigen of procyclic forms. The sequence is that of Procyclic form-specific polypeptide B-alpha (PARPB) from Trypanosoma brucei brucei.